The sequence spans 808 residues: TBC1 domain family member 10B (808 aa).

3 disordered regions span residues 1-38, 60-225, and 237-264; these read METG…VVAP, PAWV…GTCE, and PEPA…GQAP. A Phosphoserine modification is found at Ser22. Positions 27–38 are enriched in low complexity; sequence GSRAGPVVVVAP. A compositionally biased stretch (pro residues) spans 100 to 112; it reads APKPQLPSGPESP. Ser141 bears the Phosphoserine mark. The span at 149–178 shows a compositional bias: low complexity; it reads PTGTPTRTPSRTAPGALTAKPPLAPKPGTT. Phosphothreonine is present on Thr152. A compositionally biased stretch (polar residues) spans 179 to 189; that stretch reads VASGVTARSAS. Arg186 carries the post-translational modification Omega-N-methylarginine. The span at 198-209 shows a compositional bias: low complexity; that stretch reads AAAATSASAGQA. Over residues 242 to 252 the composition is skewed to polar residues; it reads NSQDLGSTSSL. The Rab-GAP TBC domain occupies 360-548; it reads GIPSSLRAKA…RVWDMFFCEG (189 aa). The segment at 629–808 is disordered; that stretch reads QYRPSRRLHG…SAEARQDAYF (180 aa). Residues 655 to 676 show a composition bias toward low complexity; the sequence is PSSSLLSLPGLKSRGSRAAGGA. Phosphoserine is present on residues Ser658, Ser661, Ser678, and Ser687. Residues 684-696 show a composition bias toward low complexity; that stretch reads RRASAGPAPGPVV. Residues 707 to 718 show a composition bias toward polar residues; the sequence is SPTGNSTPLGSS. Residues 716-782 adopt a coiled-coil conformation; that stretch reads GSSKETRKQE…KAQGRKLSLR (67 aa). Basic and acidic residues-rich tracts occupy residues 719-774 and 793-808; these read KETR…EKKA and DGGD…DAYF.

The protein localises to the cytoplasm. It is found in the cell membrane. In terms of biological role, acts as a GTPase-activating protein for RAB3A, RAB22A, RAB27A, and RAB35. Does not act on RAB2A and RAB6A. In Homo sapiens (Human), this protein is TBC1 domain family member 10B (TBC1D10B).